The primary structure comprises 291 residues: Protein/nucleic acid deglycase HchA (291 aa).

Over residues 1–18 the composition is skewed to basic and acidic residues; the sequence is MSNERDTSRTPTPDHAEH. A disordered region spans residues 1–24; the sequence is MSNERDTSRTPTPDHAEHNAFFPS. C188 (nucleophile) is an active-site residue.

The protein belongs to the peptidase C56 family. HchA subfamily.

Its subcellular location is the cytoplasm. It carries out the reaction N(omega)-(1-hydroxy-2-oxopropyl)-L-arginyl-[protein] + H2O = lactate + L-arginyl-[protein] + H(+). The enzyme catalyses N(6)-(1-hydroxy-2-oxopropyl)-L-lysyl-[protein] + H2O = lactate + L-lysyl-[protein] + H(+). The catalysed reaction is S-(1-hydroxy-2-oxopropyl)-L-cysteinyl-[protein] + H2O = lactate + L-cysteinyl-[protein] + H(+). It catalyses the reaction N(omega)-(1-hydroxy-2-oxoethyl)-L-arginyl-[protein] + H2O = L-arginyl-[protein] + glycolate + H(+). It carries out the reaction N(6)-(1-hydroxy-2-oxoethyl)-L-lysyl-[protein] + H2O = glycolate + L-lysyl-[protein] + H(+). The enzyme catalyses S-(1-hydroxy-2-oxoethyl)-L-cysteinyl-[protein] + H2O = glycolate + L-cysteinyl-[protein] + H(+). The catalysed reaction is N(2)-(1-hydroxy-2-oxopropyl)-dGTP + H2O = lactate + dGTP + H(+). It catalyses the reaction N(2)-(1-hydroxy-2-oxopropyl)-GTP + H2O = lactate + GTP + H(+). It carries out the reaction N(2)-(1-hydroxy-2-oxopropyl)-GDP + H2O = lactate + GDP + H(+). The enzyme catalyses N(2)-(1-hydroxy-2-oxopropyl)-GMP + H2O = lactate + GMP + H(+). The catalysed reaction is N(2)-(1-hydroxy-2-oxoethyl)-dGTP + H2O = dGTP + glycolate + H(+). It catalyses the reaction N(2)-(1-hydroxy-2-oxoethyl)-GTP + H2O = glycolate + GTP + H(+). It carries out the reaction N(2)-(1-hydroxy-2-oxoethyl)-GDP + H2O = glycolate + GDP + H(+). The enzyme catalyses N(2)-(1-hydroxy-2-oxoethyl)-GMP + H2O = glycolate + GMP + H(+). The catalysed reaction is an N(2)-(1-hydroxy-2-oxopropyl)-guanosine in RNA + H2O = a guanosine in RNA + lactate + H(+). It catalyses the reaction an N(2)-(1-hydroxy-2-oxopropyl)-2'-deoxyguanosine in DNA + H2O = a 2'-deoxyguanosine in DNA + lactate + H(+). It carries out the reaction an N(2)-(1-hydroxy-2-oxoethyl)-guanosine in RNA + H2O = a guanosine in RNA + glycolate + H(+). The enzyme catalyses an N(2)-(1-hydroxy-2-oxoethyl)-2'-deoxyguanosine in DNA + H2O = a 2'-deoxyguanosine in DNA + glycolate + H(+). In terms of biological role, protein and nucleotide deglycase that catalyzes the deglycation of the Maillard adducts formed between amino groups of proteins or nucleotides and reactive carbonyl groups of glyoxals. Thus, functions as a protein deglycase that repairs methylglyoxal- and glyoxal-glycated proteins, and releases repaired proteins and lactate or glycolate, respectively. Deglycates cysteine, arginine and lysine residues in proteins, and thus reactivates these proteins by reversing glycation by glyoxals. Acts on early glycation intermediates (hemithioacetals and aminocarbinols), preventing the formation of Schiff bases and advanced glycation endproducts (AGE). Also functions as a nucleotide deglycase able to repair glycated guanine in the free nucleotide pool (GTP, GDP, GMP, dGTP) and in DNA and RNA. Is thus involved in a major nucleotide repair system named guanine glycation repair (GG repair), dedicated to reversing methylglyoxal and glyoxal damage via nucleotide sanitization and direct nucleic acid repair. Plays an important role in protecting cells from carbonyl stress. The protein is Protein/nucleic acid deglycase HchA of Pseudomonas aeruginosa (strain UCBPP-PA14).